A 317-amino-acid polypeptide reads, in one-letter code: Small ribosomal subunit protein uS2 (317 aa).

Positions Ser-277–Gly-317 are disordered. Over residues Ala-281–Ala-302 the composition is skewed to low complexity.

It belongs to the universal ribosomal protein uS2 family. In terms of assembly, component of the small ribosomal subunit. Mature ribosomes consist of a small (40S) and a large (60S) subunit. The 40S subunit contains about 33 different proteins and 1 molecule of RNA (18S). The 60S subunit contains about 49 different proteins and 3 molecules of RNA (28S, 5.8S and 5S). Interacts with ribosomal protein S21.

The protein localises to the cytoplasm. Its function is as follows. Required for the assembly and/or stability of the 40S ribosomal subunit. Required for the processing of the 20S rRNA-precursor to mature 18S rRNA in a late step of the maturation of 40S ribosomal subunits. This chain is Small ribosomal subunit protein uS2, found in Urechis caupo (Innkeeper worm).